Here is a 245-residue protein sequence, read N- to C-terminus: 1-(5-phosphoribosyl)-5-[(5-phosphoribosylamino)methylideneamino] imidazole-4-carboxamide isomerase (245 aa).

The Proton acceptor role is filled by D8. D131 acts as the Proton donor in catalysis.

Belongs to the HisA/HisF family.

It localises to the cytoplasm. The catalysed reaction is 1-(5-phospho-beta-D-ribosyl)-5-[(5-phospho-beta-D-ribosylamino)methylideneamino]imidazole-4-carboxamide = 5-[(5-phospho-1-deoxy-D-ribulos-1-ylimino)methylamino]-1-(5-phospho-beta-D-ribosyl)imidazole-4-carboxamide. It functions in the pathway amino-acid biosynthesis; L-histidine biosynthesis; L-histidine from 5-phospho-alpha-D-ribose 1-diphosphate: step 4/9. The chain is 1-(5-phosphoribosyl)-5-[(5-phosphoribosylamino)methylideneamino] imidazole-4-carboxamide isomerase from Neisseria gonorrhoeae (strain NCCP11945).